We begin with the raw amino-acid sequence, 278 residues long: DegV domain-containing protein YejH (278 aa).

Residues 3 to 277 form the DegV domain; it reads IKIVTDSSIT…PGAWAIMIDY (275 aa). Hexadecanoate is bound by residues Thr60 and Ser92.

May bind long-chain fatty acids, such as palmitate, and may play a role in lipid transport or fatty acid metabolism. This is DegV domain-containing protein YejH (yejH) from Lactococcus lactis subsp. lactis (strain IL1403) (Streptococcus lactis).